The primary structure comprises 117 residues: Large ribosomal subunit protein bL19 (117 aa).

Belongs to the bacterial ribosomal protein bL19 family.

Its function is as follows. This protein is located at the 30S-50S ribosomal subunit interface and may play a role in the structure and function of the aminoacyl-tRNA binding site. The chain is Large ribosomal subunit protein bL19 from Bacteroides thetaiotaomicron (strain ATCC 29148 / DSM 2079 / JCM 5827 / CCUG 10774 / NCTC 10582 / VPI-5482 / E50).